Consider the following 77-residue polypeptide: Serine protease inhibitor 2 (77 aa).

Residues 1-17 form the signal peptide; sequence MMFTPLIVLTLLVLATA. 5 disulfides stabilise this stretch: C21-C53, C30-C48, C33-C44, C37-C74, and C55-C68. Residues 21 to 74 enclose the TIL domain; it reads CGPNEQWSDCPKCELQCGESDKPCATICGEPKCYCSPDKYRRIPDGRCIRKIQC.

Its subcellular location is the secreted. Functionally, defends the organism against the host's proteinases. This chain is Serine protease inhibitor 2, found in Anisakis simplex (Herring worm).